We begin with the raw amino-acid sequence, 425 residues long: Serine--tRNA ligase (425 aa).

230–232 (TAE) serves as a coordination point for L-serine. 261–263 (RSE) contributes to the ATP binding site. An L-serine-binding site is contributed by E284. 348 to 351 (EISS) is an ATP binding site. Residue S384 coordinates L-serine.

Belongs to the class-II aminoacyl-tRNA synthetase family. Type-1 seryl-tRNA synthetase subfamily. In terms of assembly, homodimer. The tRNA molecule binds across the dimer.

The protein localises to the cytoplasm. The enzyme catalyses tRNA(Ser) + L-serine + ATP = L-seryl-tRNA(Ser) + AMP + diphosphate + H(+). The catalysed reaction is tRNA(Sec) + L-serine + ATP = L-seryl-tRNA(Sec) + AMP + diphosphate + H(+). Its pathway is aminoacyl-tRNA biosynthesis; selenocysteinyl-tRNA(Sec) biosynthesis; L-seryl-tRNA(Sec) from L-serine and tRNA(Sec): step 1/1. Catalyzes the attachment of serine to tRNA(Ser). Is also able to aminoacylate tRNA(Sec) with serine, to form the misacylated tRNA L-seryl-tRNA(Sec), which will be further converted into selenocysteinyl-tRNA(Sec). The sequence is that of Serine--tRNA ligase from Streptococcus pyogenes serotype M49 (strain NZ131).